The primary structure comprises 578 residues: E3 ubiquitin protein ligase RIN2 (578 aa).

The next 6 helical transmembrane spans lie at 6–26, 58–78, 111–131, 161–181, 186–206, and 272–292; these read LPVSVASTALSFVGLQVWTEL, FTIALLTNFVLNVYILLVLSL, LVIPPTIFQGVLWTVWLTVLC, VYSVLFLVLSVDMFWIKLSLM, IGSAVYLLLLFEPCSIAFETL, and YLHIWWLHGIAFHLVDAVLFL. An RING-type; atypical zinc finger spans residues 337–379; that stretch reads CAICREPMAKAKRLHCNHLFHLGCLRSWLDQGLNEVYSCPTCR. Polar residues predominate over residues 504–513; the sequence is QASTSSTTVP. A disordered region spans residues 504 to 524; sequence QASTSSTTVPPGNGGRTGGLH. The region spanning 538–578 is the CUE domain; that stretch reads NILAMAETVREVMPHVPDEIIFQDLQRTNSVAVTVNNLLQM.

Interacts (via C-terminus) with RPM1 (via N-terminus).

It is found in the membrane. It carries out the reaction S-ubiquitinyl-[E2 ubiquitin-conjugating enzyme]-L-cysteine + [acceptor protein]-L-lysine = [E2 ubiquitin-conjugating enzyme]-L-cysteine + N(6)-ubiquitinyl-[acceptor protein]-L-lysine.. Its pathway is protein modification; protein ubiquitination. E3 ubiquitin protein ligase that acts as a positive regulator of RPM1- and RPS2-dependent hypersensitive response (HR), in association with RIN3. Probably not required for RPM1 degradation during HR. This chain is E3 ubiquitin protein ligase RIN2 (RIN2), found in Arabidopsis thaliana (Mouse-ear cress).